We begin with the raw amino-acid sequence, 305 residues long: Cytochrome c biogenesis protein CcsA (305 aa).

8 consecutive transmembrane segments (helical) span residues 11-31 (ANAS…KAIF), 36-56 (ILQL…ALLL), 75-95 (LMFL…YIQI), 97-117 (FIGF…TFFL), 142-162 (IMMA…AFLF), 212-232 (TIGI…VWAN), 239-259 (WSWD…AIYL), and 273-293 (AIVA…VNLL).

Belongs to the CcmF/CycK/Ccl1/NrfE/CcsA family. In terms of assembly, may interact with Ccs1.

The protein resides in the plastid. It is found in the chloroplast thylakoid membrane. Its function is as follows. Required during biogenesis of c-type cytochromes (cytochrome c6 and cytochrome f) at the step of heme attachment. The chain is Cytochrome c biogenesis protein CcsA from Mesostigma viride (Green alga).